We begin with the raw amino-acid sequence, 341 residues long: HTH-type transcriptional repressor PurR (341 aa).

The HTH lacI-type domain maps to 2 to 56 (ATIKDVAKRANVSTTTVSHVINKTRFVAEETRNAVWAAIKELHYSPSAVARSLKV). A DNA-binding region (H-T-H motif) is located at residues 4–23 (IKDVAKRANVSTTTVSHVIN). Residues 48 to 56 (SAVARSLKV) mediate DNA binding. Hypoxanthine-binding residues include Tyr-73, Arg-190, Thr-192, Phe-221, and Asp-275.

As to quaternary structure, homodimer.

It functions in the pathway purine metabolism; purine nucleotide biosynthesis [regulation]. In terms of biological role, is the main repressor of the genes involved in the de novo synthesis of purine nucleotides, regulating purB, purC, purEK, purF, purHD, purL, purMN and guaBA expression. PurR is allosterically activated to bind its cognate DNA by binding the purine corepressors, hypoxanthine or guanine, thereby effecting transcription repression. The polypeptide is HTH-type transcriptional repressor PurR (Salmonella arizonae (strain ATCC BAA-731 / CDC346-86 / RSK2980)).